A 425-amino-acid polypeptide reads, in one-letter code: SWI/SNF and RSC complexes subunit ssr3 (425 aa).

Positions 1-16 are enriched in polar residues; that stretch reads MSNNSRLPENGVQSGN. Residues 1-23 are disordered; the sequence is MSNNSRLPENGVQSGNGEDAELK. In terms of domain architecture, SWIB/MDM2 spans 201-278; sequence EHPERYKLSK…PELMNRFLEP (78 aa).

This sequence belongs to the SMARCD family. Component of the RSC complex composed of at least arp9, arp42, rsc1, rsc4, rsc7, rsc9, rsc58, sfh1, snf21, ssr1, ssr2, ssr3 and ssr4. The complex interacts with histone and histone variant components of centromeric chromatin. Component of the SWI/SNF global transcription activator complex composed of at least arp9, arp42, snf5, snf22, snf30, sbf59, sol1, ssr1, ssr2, ssr3, ssr4 and tfg3.

Its subcellular location is the cytoplasm. It localises to the nucleus. Its function is as follows. Component of the chromatin structure remodeling complex (RSC), which is involved in transcription regulation and nucleosome positioning. Controls particularly membrane and organelle development genes. Part of the SWI/SNF complex, an ATP-dependent chromatin remodeling complex, required for the positive and negative regulation of gene expression of a large number of genes. It changes chromatin structure by altering DNA-histone contacts within a nucleosome, leading eventually to a change in nucleosome position, thus facilitating or repressing binding of gene-specific transcription factors. This Schizosaccharomyces pombe (strain 972 / ATCC 24843) (Fission yeast) protein is SWI/SNF and RSC complexes subunit ssr3 (ssr3).